Consider the following 314-residue polypeptide: Ribosomal RNA small subunit methyltransferase H (314 aa).

Residues 35 to 37, Asp54, Phe83, Asp104, and Gln111 each bind S-adenosyl-L-methionine; that span reads GGH.

This sequence belongs to the methyltransferase superfamily. RsmH family.

The protein resides in the cytoplasm. The catalysed reaction is cytidine(1402) in 16S rRNA + S-adenosyl-L-methionine = N(4)-methylcytidine(1402) in 16S rRNA + S-adenosyl-L-homocysteine + H(+). Functionally, specifically methylates the N4 position of cytidine in position 1402 (C1402) of 16S rRNA. The polypeptide is Ribosomal RNA small subunit methyltransferase H (Oenococcus oeni (strain ATCC BAA-331 / PSU-1)).